The primary structure comprises 850 residues: DNA polymerase I (850 aa).

Residues 1–288 (MKLVIFDGNS…SIIKRLGLSE (288 aa)) enclose the 5'-3' exonuclease domain. The polymerase stretch occupies residues 470 to 850 (VDRDALIQYT…KEGLNWYETK (381 aa)).

It belongs to the DNA polymerase type-A family.

It catalyses the reaction DNA(n) + a 2'-deoxyribonucleoside 5'-triphosphate = DNA(n+1) + diphosphate. Its function is as follows. In addition to polymerase activity, this DNA polymerase exhibits 3'-5' and 5'-3' exonuclease activity. In Caldicellulosiruptor bescii (strain ATCC BAA-1888 / DSM 6725 / KCTC 15123 / Z-1320) (Anaerocellum thermophilum), this protein is DNA polymerase I (polA).